Here is a 1118-residue protein sequence, read N- to C-terminus: Ubiquitin carboxyl-terminal hydrolase 8 (1118 aa).

The MIT domain occupies 33-116 (TKSYVHSALK…ESLKLRYEEA (84 aa)). Composition is skewed to basic and acidic residues over residues 120–146 (KKLE…REDG) and 158–177 (LDSK…KCET). The interval 120 to 177 (KKLEEKDRQEEAQRLQQKRQETGREDGGTLAKGSLENVLDSKDKTQKSNGEKNEKCET) is disordered. Serine 160 is subject to Phosphoserine. The Rhodanese domain maps to 195 to 313 (KNISLIIMDA…WLLCYPQYTT (119 aa)). Phosphoserine is present on residues serine 392 and serine 400. The disordered stretch occupies residues 402 to 447 (KNVPQIDRTKKPAVKLPEEHRIKSESTNHEQQSPQSGKVIPDRSTK). The SH3-binding signature appears at 405-413 (PQIDRTKKP). Residues 417–429 (LPEEHRIKSESTN) show a composition bias toward basic and acidic residues. Serine 452 is subject to Phosphoserine. The span at 475 to 573 (KNKQEKELRE…AKKSVEDRGK (99 aa)) shows a compositional bias: basic and acidic residues. Disordered stretches follow at residues 475–648 (KNKQ…GRIV) and 679–746 (YPPE…ENKP). Threonine 577 is subject to Phosphothreonine. A compositionally biased stretch (basic and acidic residues) spans 618–645 (TFREDTDDTERNKAQREPLTRARSEEMG). Positions 716–726 (SYSSPDITQAI) are enriched in polar residues. Phosphoserine is present on residues serine 718 and serine 719. One can recognise a USP domain in the interval 777–1109 (TGLRNLGNTC…AAYILFYTSL (333 aa)). Cysteine 786 serves as the catalytic Nucleophile. Threonine 945 carries the post-translational modification Phosphothreonine. Histidine 1067 acts as the Proton acceptor in catalysis.

It belongs to the peptidase C19 family. In terms of assembly, forms a ternary complex with RNF128 and OTUB1. Interacts (via C-terminal UCH catalytic domain) with OTUB1 isoform 1. Interacts with STAM2 (via SH3 domain). Interacts with DNAJB3, EGFR, EPS15, RASGRF1, RNF41, YWHAE, YWHAG and YWHAZ. Interacts with NBR1, RASGRF1, RNF41 and IST1. Associates with the ESCRT-0 complex and with microtubules. Interacts with BIRC6/bruce and KIF23/MKLP1. (Microbial infection) Interacts with Zika virus non-structural protein 1. Phosphorylation of Ser-718 is essential for interaction with YWHAE and for cytosol localization. Undergoes dephosphorylation at Ser-718 in the M phase. Tyrosine-phosphorylated in its N-terminal half in an EGFR-dependent manner. Post-translationally, ubiquitinated. Inactive form is mostly monoubiquitinated, but polyubiquitination happens too. Ubiquitination is increased in EGF-stimulated cells. Ubiquitination of active form is undetectable, suggesting a possibility that USP8 deubiquitinates itself, thereby regulating its own function.

It is found in the cytoplasm. It localises to the nucleus. Its subcellular location is the endosome membrane. The protein localises to the cell membrane. It catalyses the reaction Thiol-dependent hydrolysis of ester, thioester, amide, peptide and isopeptide bonds formed by the C-terminal Gly of ubiquitin (a 76-residue protein attached to proteins as an intracellular targeting signal).. Hydrolase that can remove conjugated ubiquitin from proteins and therefore plays an important regulatory role at the level of protein turnover by preventing degradation. Converts both 'Lys-48' an 'Lys-63'-linked ubiquitin chains. Catalytic activity is enhanced in the M phase. Involved in cell proliferation. Required to enter into S phase in response to serum stimulation. May regulate T-cell anergy mediated by RNF128 via the formation of a complex containing RNF128 and OTUB1. Probably regulates the stability of STAM2 and RASGRF1. Regulates endosomal ubiquitin dynamics, cargo sorting, membrane traffic at early endosomes, and maintenance of ESCRT-0 stability. The level of protein ubiquitination on endosomes is essential for maintaining the morphology of the organelle. Deubiquitinates EPS15 and controls tyrosine kinase stability. Removes conjugated ubiquitin from EGFR thus regulating EGFR degradation and downstream MAPK signaling. Involved in acrosome biogenesis through interaction with the spermatid ESCRT-0 complex and microtubules. Deubiquitinates BIRC6/bruce and KIF23/MKLP1. Deubiquitinates BACE1 which inhibits BACE1 lysosomal degradation and modulates BACE-mediated APP cleavage and amyloid-beta formation. This is Ubiquitin carboxyl-terminal hydrolase 8 from Homo sapiens (Human).